The sequence spans 136 residues: Keratin-associated protein 4-2 (136 aa).

20 consecutive repeat copies span residues 5-9, 20-24, 25-29, 30-34, 35-39, 40-44, 45-49, 50-54, 55-59, 60-64, 65-69, 70-74, 75-79, 80-84, 90-94, 95-99, 100-104, 110-114, 120-124, and 125-129. Residues 5–129 are 20 X 5 AA repeats OF C-C-[GRQVS]-[SPT]-[VSTQ]; the sequence is CCGSVCSDQG…CCVSTCCRPT (125 aa).

This sequence belongs to the KRTAP type 4 family. Interacts with hair keratins.

In terms of biological role, in the hair cortex, hair keratin intermediate filaments are embedded in an interfilamentous matrix, consisting of hair keratin-associated proteins (KRTAP), which are essential for the formation of a rigid and resistant hair shaft through their extensive disulfide bond cross-linking with abundant cysteine residues of hair keratins. The matrix proteins include the high-sulfur and high-glycine-tyrosine keratins. The sequence is that of Keratin-associated protein 4-2 (KRTAP4-2) from Homo sapiens (Human).